Reading from the N-terminus, the 645-residue chain is MSDKVYPVTAEWSKSAYVDAAKYKSMYESSVSEPDKFWGEHGKRIDWVKPYTKVKNTSFDPHNVSIKWFEDGVTNVSTNCIDRHLATLGDQTAIIWEGDDPNESKHITYKQLHEEVCRLANVLKSYGISKGDTVTIYLPMIPEAAYAMLACARIGAIHSIVFGGFSADSLGGRIEGCKSKLIITADEGYRGGRKVPLKVNADAAIKKVDGIVETMIVVRRTGGKVAWTEGRDVWYDEALAKASPDCPAAEMNAEDPLFILFTSGSTGAPKGVVHSTGGYLVWASMTHQYVFDYRPGEVYWCTADVGWVTGHSYIVYGPLANGATTLMFEGVPSYPTISRFWDVVDKHQVNIFYTAPTAIRSLMGAGDGPVKATSRKTLRVLGSVGEPINPEAWEWYYRVVGEERCPIVDTWWQTETGGILISPLPGATALKPGSATQPFFGVQPQVVDAAGEVLEGPCSGNLVIADSWPAQMRTLFNDHERFVQAYFSAYPGKYFTGDGCRRDEDGYYWITGRVDDVINVSGHRLGTAEVESSLVAHIKVAEAAVVGYPHDLKGQGIYAYVTLMTGIEPSEELRKELVSWVRKDIGPIASPDIVHFAPGLPKTRSGKIMRRILRKIAEKEFSALGDTSTLADPSVVDDLIRERAN.

CoA is bound by residues 190-193 (RGGR) and threonine 309. ATP contacts are provided by residues 385 to 387 (GEP), 409 to 414 (DTWWQT), aspartate 498, and arginine 513. Residue serine 521 participates in CoA binding. An ATP-binding site is contributed by arginine 524. Mg(2+) contacts are provided by valine 535, histidine 537, and valine 540. CoA is bound at residue arginine 582. Position 607 is an N6-acetyllysine (lysine 607).

Belongs to the ATP-dependent AMP-binding enzyme family. The cofactor is Mg(2+). In terms of processing, acetylated. Deacetylation by the SIR2-homolog deacetylase activates the enzyme.

The catalysed reaction is acetate + ATP + CoA = acetyl-CoA + AMP + diphosphate. In terms of biological role, catalyzes the conversion of acetate into acetyl-CoA (AcCoA), an essential intermediate at the junction of anabolic and catabolic pathways. AcsA undergoes a two-step reaction. In the first half reaction, AcsA combines acetate with ATP to form acetyl-adenylate (AcAMP) intermediate. In the second half reaction, it can then transfer the acetyl group from AcAMP to the sulfhydryl group of CoA, forming the product AcCoA. In Methylocella silvestris (strain DSM 15510 / CIP 108128 / LMG 27833 / NCIMB 13906 / BL2), this protein is Acetyl-coenzyme A synthetase.